A 242-amino-acid polypeptide reads, in one-letter code: ATP synthase subunit b 2 (242 aa).

Residues 4–24 (LLAISSLTLLASLVLLVVSPA) form a helical membrane-spanning segment. Residues 43 to 74 (ADSEDGDHDHDHEGDDHGHDEAAGDEHGHGDG) are disordered. Residues 49-74 (DHDHDHEGDDHGHDEAAGDEHGHGDG) show a composition bias toward basic and acidic residues.

Belongs to the ATPase B chain family. F-type ATPases have 2 components, F(1) - the catalytic core - and F(0) - the membrane proton channel. F(1) has five subunits: alpha(3), beta(3), gamma(1), delta(1), epsilon(1). F(0) has three main subunits: a(1), b(2) and c(10-14). The alpha and beta chains form an alternating ring which encloses part of the gamma chain. F(1) is attached to F(0) by a central stalk formed by the gamma and epsilon chains, while a peripheral stalk is formed by the delta and b chains.

The protein localises to the cell inner membrane. In terms of biological role, f(1)F(0) ATP synthase produces ATP from ADP in the presence of a proton or sodium gradient. F-type ATPases consist of two structural domains, F(1) containing the extramembraneous catalytic core and F(0) containing the membrane proton channel, linked together by a central stalk and a peripheral stalk. During catalysis, ATP synthesis in the catalytic domain of F(1) is coupled via a rotary mechanism of the central stalk subunits to proton translocation. Its function is as follows. Component of the F(0) channel, it forms part of the peripheral stalk, linking F(1) to F(0). The polypeptide is ATP synthase subunit b 2 (Rhodopirellula baltica (strain DSM 10527 / NCIMB 13988 / SH1)).